Reading from the N-terminus, the 409-residue chain is Arginine deiminase (409 aa).

Residue cysteine 399 is the Amidino-cysteine intermediate of the active site.

This sequence belongs to the arginine deiminase family.

The protein resides in the cytoplasm. It carries out the reaction L-arginine + H2O = L-citrulline + NH4(+). It participates in amino-acid degradation; L-arginine degradation via ADI pathway; carbamoyl phosphate from L-arginine: step 1/2. This is Arginine deiminase from Borreliella afzelii (strain PKo) (Borrelia afzelii).